The primary structure comprises 104 residues: Large ribosomal subunit protein bL21 (104 aa).

Belongs to the bacterial ribosomal protein bL21 family. Part of the 50S ribosomal subunit. Contacts protein L20.

Its function is as follows. This protein binds to 23S rRNA in the presence of protein L20. This Moorella thermoacetica (strain ATCC 39073 / JCM 9320) protein is Large ribosomal subunit protein bL21.